A 246-amino-acid chain; its full sequence is 14-3-3 protein eta (246 aa).

Glycine 2 carries the N-acetylglycine modification. Residues serine 25 and serine 59 each carry the phosphoserine modification.

It belongs to the 14-3-3 family. As to quaternary structure, homodimer. Interacts with many nuclear hormone receptors and cofactors including AR, ESR1, ESR2, MC2R, NR3C1, NRIP1, PPARBP and THRA. Interacts with ABL1 (phosphorylated form); the interaction retains it in the cytoplasm. Interacts with ARHGEF28 and CDK16. Weakly interacts with CDKN1B. Interacts with GAB2. Interacts with KCNK18 in a phosphorylation-dependent manner. Interacts with SAMSN1. Interacts with the 'Ser-241' phosphorylated form of PDPK1. Interacts with the 'Thr-369' phosphorylated form of DAPK2. Interacts with PI4KB, TBC1D22A and TBC1D22B. Interacts with SLITRK1. Interacts with MEFV. In terms of processing, phosphorylated on Ser-59 by protein kinase C delta type catalytic subunit in a sphingosine-dependent fashion. As to expression, expressed mainly in the brain and present in other tissues albeit at lower levels.

Functionally, adapter protein implicated in the regulation of a large spectrum of both general and specialized signaling pathways. Binds to a large number of partners, usually by recognition of a phosphoserine or phosphothreonine motif. Binding generally results in the modulation of the activity of the binding partner. Negatively regulates the kinase activity of PDPK1. The sequence is that of 14-3-3 protein eta (YWHAH) from Homo sapiens (Human).